The chain runs to 556 residues: Peptide chain release factor 3 (556 aa).

Residues 28–297 (QQRRNFAIIS…AFLDYALKPG (270 aa)) enclose the tr-type G domain. GTP is bound by residues 37–44 (SHPDAGKT), 105–109 (DTPGH), and 159–162 (NKMD).

Belongs to the TRAFAC class translation factor GTPase superfamily. Classic translation factor GTPase family. PrfC subfamily.

It localises to the cytoplasm. Its function is as follows. Increases the formation of ribosomal termination complexes and stimulates activities of RF-1 and RF-2. It binds guanine nucleotides and has strong preference for UGA stop codons. It may interact directly with the ribosome. The stimulation of RF-1 and RF-2 is significantly reduced by GTP and GDP, but not by GMP. The chain is Peptide chain release factor 3 from Synechococcus elongatus (strain ATCC 33912 / PCC 7942 / FACHB-805) (Anacystis nidulans R2).